The following is a 215-amino-acid chain: Polysialic acid O-acetyltransferase (215 aa).

Residues 119–121 (DMH), Arg148, Lys154, Ser166, 171–172 (YK), and Lys190 contribute to the acetyl-CoA site.

This sequence belongs to the transferase hexapeptide repeat family. As to quaternary structure, homotrimer.

The catalysed reaction is [(2-&gt;6)-alpha-D-glucosyl-(1-&gt;4)-N-acetyl-alpha-D-neuraminosyl](n) + n acetyl-CoA = [(2-&gt;6)-alpha-D-glucosyl-(1-&gt;4)-N,7-O-diacetyl-alpha-D-neuraminosyl](n) + n CoA. It carries out the reaction [(2-&gt;6)-alpha-D-glucosyl-(1-&gt;4)-N-acetyl-alpha-D-neuraminosyl](n) + n acetyl-CoA = [(2-&gt;6)-alpha-D-glucosyl-(1-&gt;4)-N,O(9)-diacetyl-alpha-D-neuraminosyl](n) + n CoA. Functionally, catalyzes the O-acetylation of capsular polymeric sialic acid consisting of polymers of (2-&gt;6)-alpha-D-glucosyl-(1-&gt;4)-N-acetyl-alpha-D-neuraminosyl residues. Shows high substrate specificity toward polymers of sialic acid that contains a large number of residues. In Neisseria meningitidis, this protein is Polysialic acid O-acetyltransferase.